The chain runs to 40 residues: Fibrinolytic protease (40 aa).

The Peptidase S1 domain occupies 1 to 40 (IVGGNEVTPHAYPWQVGLFIDDMYFCGGSISVTLTGWGKP).

This sequence belongs to the peptidase S1 family.

The protein resides in the secreted. The protein localises to the extracellular space. Serine protease with fibrinolytic activity. This is Fibrinolytic protease from Euphausia superba (Antarctic krill).